The chain runs to 360 residues: Venom serine protease Bi-VSP (360 aa).

The first 26 residues, 1 to 26 (MTGSKMLFACLALIAFLHPLVHVASA), serve as a signal peptide directing secretion. The propeptide occupies 27-113 (QECTTPNNKA…CGFSNVSHTR (87 aa)). Positions 28-79 (ECTTPNNKAGKCLGIRVCKPLLEMLQTQGHAAADFLRQSVCKYENNNPIVCC) constitute a Clip domain. Disulfide bonds link Cys29/Cys78, Cys39/Cys68, Cys45/Cys79, Cys104/Cys230, Cys147/Cys163, Cys278/Cys296, and Cys307/Cys335. N-linked (GlcNAc...) asparagine glycosylation is present at Asn108. Positions 114–360 (VVGGKPAVLG…LDDFILPAMQ (247 aa)) constitute a Peptidase S1 domain. Catalysis depends on His162, which acts as the Charge relay system. Ca(2+) is bound by residues Asp176, Asn178, Arg181, and Asp184. Asp210 acts as the Charge relay system in catalysis. Catalysis depends on Ser311, which acts as the Charge relay system.

The protein belongs to the peptidase S1 family. CLIP subfamily. In terms of tissue distribution, expressed by the venom gland.

It localises to the secreted. Multifunctional venom serine protease. In insects, it acts as an arthropod prophenoloxidase-activating factor, thereby triggering the phenoloxidase cascade. When injected into larvae, it induces a lethal melanization response in target insects by modulating the innate immune response. In mammals, it converts fibrinogen into fibrin, activates prothrombin, and also degrades fibrin. In mammal, it may act in a cooperative manner with the serine protease inhibitor Bi-KTI (AC G3LH89) to promote the spread of bee venom under anti-bleeding conditions. This is Venom serine protease Bi-VSP from Bombus ignitus (Bumblebee).